The primary structure comprises 269 residues: Formamidopyrimidine-DNA glycosylase (269 aa).

The Schiff-base intermediate with DNA role is filled by proline 2. Glutamate 3 functions as the Proton donor in the catalytic mechanism. Lysine 57 serves as the catalytic Proton donor; for beta-elimination activity. DNA contacts are provided by histidine 90, arginine 109, and lysine 150. The segment at 235–269 adopts an FPG-type zinc-finger fold; sequence QVYGRKGEPCRVCGTPIVATKHAQRATFYCRHCQK. Arginine 259 serves as the catalytic Proton donor; for delta-elimination activity.

Belongs to the FPG family. As to quaternary structure, monomer. It depends on Zn(2+) as a cofactor.

The catalysed reaction is Hydrolysis of DNA containing ring-opened 7-methylguanine residues, releasing 2,6-diamino-4-hydroxy-5-(N-methyl)formamidopyrimidine.. It catalyses the reaction 2'-deoxyribonucleotide-(2'-deoxyribose 5'-phosphate)-2'-deoxyribonucleotide-DNA = a 3'-end 2'-deoxyribonucleotide-(2,3-dehydro-2,3-deoxyribose 5'-phosphate)-DNA + a 5'-end 5'-phospho-2'-deoxyribonucleoside-DNA + H(+). Involved in base excision repair of DNA damaged by oxidation or by mutagenic agents. Acts as a DNA glycosylase that recognizes and removes damaged bases. Has a preference for oxidized purines, such as 7,8-dihydro-8-oxoguanine (8-oxoG). Has AP (apurinic/apyrimidinic) lyase activity and introduces nicks in the DNA strand. Cleaves the DNA backbone by beta-delta elimination to generate a single-strand break at the site of the removed base with both 3'- and 5'-phosphates. This is Formamidopyrimidine-DNA glycosylase from Salmonella agona (strain SL483).